Consider the following 178-residue polypeptide: Large ribosomal subunit protein uL6 (178 aa).

It belongs to the universal ribosomal protein uL6 family. In terms of assembly, part of the 50S ribosomal subunit.

In terms of biological role, this protein binds to the 23S rRNA, and is important in its secondary structure. It is located near the subunit interface in the base of the L7/L12 stalk, and near the tRNA binding site of the peptidyltransferase center. The chain is Large ribosomal subunit protein uL6 from Thermoplasma volcanium (strain ATCC 51530 / DSM 4299 / JCM 9571 / NBRC 15438 / GSS1).